The sequence spans 950 residues: Serine/threonine-protein kinase atg1 (950 aa).

Residues 6 to 311 (YTRLDEIGRG…FPDFFENGVI (306 aa)) form the Protein kinase domain. Residues 12-20 (IGRGSFATV) and lysine 35 contribute to the ATP site. The active-site Proton acceptor is the aspartate 149. 5 disordered regions span residues 314–425 (PIPG…HATA), 443–467 (RQRGRNTFSEGSPQTDRQADKLREE), 505–570 (QGGI…QSPT), 671–690 (VQTDPSSKGNLAGERENPDS), and 926–950 (PTPSANVPSKMAPLNPVSVGATPPK). Composition is skewed to polar residues over residues 370–389 (GLTQRPPSQNQRFGTPPTTT), 447–458 (RNTFSEGSPQTD), and 511–520 (GAQTGALSRR). Basic and acidic residues predominate over residues 549 to 565 (SRADSMHNRQSSYERRY).

It belongs to the protein kinase superfamily. Ser/Thr protein kinase family. APG1/unc-51/ULK1 subfamily. In terms of assembly, homodimer. Forms a ternary complex with ATG13 and ATG17.

Its subcellular location is the cytoplasm. The protein resides in the preautophagosomal structure membrane. It catalyses the reaction L-seryl-[protein] + ATP = O-phospho-L-seryl-[protein] + ADP + H(+). It carries out the reaction L-threonyl-[protein] + ATP = O-phospho-L-threonyl-[protein] + ADP + H(+). In terms of biological role, serine/threonine protein kinase involved in the cytoplasm to vacuole transport (Cvt) and found to be essential in autophagy, where it is required for the formation of autophagosomes. Involved in the clearance of protein aggregates which cannot be efficiently cleared by the proteasome. Required for selective autophagic degradation of the nucleus (nucleophagy) as well as for mitophagy which contributes to regulate mitochondrial quantity and quality by eliminating the mitochondria to a basal level to fulfill cellular energy requirements and preventing excess ROS production. Also involved in endoplasmic reticulum-specific autophagic process, in selective removal of ER-associated degradation (ERAD) substrates. Plays a key role in ATG9 and ATG23 cycling through the pre-autophagosomal structure and is necessary to promote ATG18 binding to ATG9 through phosphorylation of ATG9. Catalyzes phosphorylation of ATG4, decreasing the interaction between ATG4 and ATG8 and impairing deconjugation of PE-conjugated forms of ATG8. The chain is Serine/threonine-protein kinase atg1 from Neosartorya fischeri (strain ATCC 1020 / DSM 3700 / CBS 544.65 / FGSC A1164 / JCM 1740 / NRRL 181 / WB 181) (Aspergillus fischerianus).